The following is a 404-amino-acid chain: Acyl-[acyl-carrier-protein] desaturase 7, chloroplastic (404 aa).

The transit peptide at 1–39 (MAASATTSTLAVTMFGYPNRNCHLKPPATATLRFWRSAA) directs the protein to the chloroplast. Glu-138, Glu-176, His-179, Glu-229, Glu-262, and His-265 together coordinate Fe cation.

Belongs to the fatty acid desaturase type 2 family. Homodimer. Fe(2+) serves as cofactor.

It is found in the plastid. Its subcellular location is the chloroplast. It participates in lipid metabolism; fatty acid metabolism. Introduces a cis double bond in the acyl chain of an acyl-[acyl-carrier protein]. The protein is Acyl-[acyl-carrier-protein] desaturase 7, chloroplastic of Oryza sativa subsp. indica (Rice).